The sequence spans 379 residues: Ribosomal RNA small subunit methyltransferase H (379 aa).

Residues 71–73, E90, D157, and H164 contribute to the S-adenosyl-L-methionine site; that span reads GGH.

Belongs to the methyltransferase superfamily. RsmH family.

The protein localises to the cytoplasm. It carries out the reaction cytidine(1402) in 16S rRNA + S-adenosyl-L-methionine = N(4)-methylcytidine(1402) in 16S rRNA + S-adenosyl-L-homocysteine + H(+). Specifically methylates the N4 position of cytidine in position 1402 (C1402) of 16S rRNA. The protein is Ribosomal RNA small subunit methyltransferase H of Treponema pallidum (strain Nichols).